A 1485-amino-acid chain; its full sequence is Cystic fibrosis transmembrane conductance regulator (1485 aa).

Over 1–78 (MQKTPLEKAS…KLINALKRCF (78 aa)) the chain is Cytoplasmic. Residues 79 to 99 (FWKFLFYGILLYLGEVTKAVQ) form a helical membrane-spanning segment. An ABC transmembrane type-1 1 domain is found at 82–366 (FLFYGILLYL…WAVQTWYDSL (285 aa)). The Extracellular portion of the chain corresponds to 100-123 (PLLLGRIIASYDRDNEHERSIAYY). Residues 124-147 (LAIGLCLLFVVRMLLLHPAIFGLH) traverse the membrane as a helical segment. Over 148–196 (HIGMQMRIAMFSLIYKKTLKLSSKVLDKISTGQLVSLLSNNLNKFDEGL) the chain is Cytoplasmic. Residues 197-217 (ALAHFVWIAPLQVLLLMGLLW) form a helical membrane-spanning segment. Topologically, residues 218-223 (DLLQAS) are extracellular. Residues 224-244 (AFCGLGFLIILSLFQARLGRM) form a helical membrane-spanning segment. The Cytoplasmic portion of the chain corresponds to 245–299 (MMKYKDKRAGKINERLVITSQIIENIQSVKAYCWENAMEKIIETIRETELKLTRK). The chain crosses the membrane as a helical span at residues 300–320 (AAYVRYFNSSAFFFSGFFVVF). At 321–340 (LSIVPHLLLDGISLRKIFTT) the chain is on the extracellular side. The chain crosses the membrane as a helical span at residues 341–359 (ISFSIVLRMAVTRQFPWAV). The Cytoplasmic portion of the chain corresponds to 360–860 (QTWYDSLGVI…YLRFLTAHKN (501 aa)). Residues Trp-402, Ser-435, 459-466 (GSTGAGKT), and Gln-494 each bind ATP. The ABC transporter 1 domain occupies 422 to 647 (ISNEDPSAFF…RPEFSSHLIG (226 aa)). A disordered R region region spans residues 652–833 (NAERRNSIIT…EEINEEDLKE (182 aa)). Polar residues predominate over residues 750 to 760 (PRSNFLNTGPT). Residues 861-881 (FIFILVFCLVIFFVEVAASSA) form a helical membrane-spanning segment. The ABC transmembrane type-1 2 domain occupies 880 to 1163 (SAWLWIIKRN…ASIDVDSLMR (284 aa)). Residues 882–923 (WLWIIKRNAPAINMTSNENVSEVSDTLSVIVTHTSFYYVFYI) are Extracellular-facing. Asn-894 and Asn-900 each carry an N-linked (GlcNAc...) asparagine glycan. The discontinuously helical transmembrane segment at 924 to 944 (YVGVADSLLALGIFRGLPLVH) threads the bilayer. At 945–995 (SLISVSKVLHKKMLHAILHAPMSTFNTMRAGRILNRFSKDTAILDDILPLS) the chain is on the cytoplasmic side. A helical membrane pass occupies residues 996–1016 (IFDLTQLVLIVIGAITVVSLL). Topologically, residues 1017-1018 (EP) are extracellular. A helical membrane pass occupies residues 1019–1039 (YIFLATVPVIVAFILLRSYFL). Residues 1040-1100 (HTSQQLKQLE…TANWFLYLST (61 aa)) lie on the Cytoplasmic side of the membrane. The helical transmembrane segment at 1101 to 1121 (LRWFQMTIEMIFVIFFIAVSF) threads the bilayer. Over 1122–1135 (ISIATSGAGEEKVG) the chain is Extracellular. A helical transmembrane segment spans residues 1136 to 1156 (IVLTLAMNIMNTLQWAVNASI). Residues 1157-1485 (DVDSLMRSVS…TEEEVQDTRL (329 aa)) are Cytoplasmic-facing. Residues 1213–1446 (MTVKNLSANY…KSFFKQAISH (234 aa)) enclose the ABC transporter 2 domain. ATP-binding positions include Tyr-1222 and 1247 to 1254 (GRTGSGKS). The tract at residues 1458 to 1485 (RNSSKRKSRPQISALQEETEEEVQDTRL) is disordered. Acidic residues predominate over residues 1474 to 1485 (EETEEEVQDTRL). The PDZ-binding signature appears at 1483 to 1485 (TRL).

Belongs to the ABC transporter superfamily. ABCC family. CFTR transporter (TC 3.A.1.202) subfamily. Monomer; does not require oligomerization for channel activity. May form oligomers in the membrane. Post-translationally, phosphorylated; cAMP treatment promotes phosphorylation and activates the channel. Dephosphorylation decreases the ATPase activity (in vitro). Phosphorylation at PKA sites activates the channel. Phosphorylation at PKC sites enhances the response to phosphorylation by PKA.

It localises to the apical cell membrane. Its subcellular location is the early endosome membrane. The protein localises to the cell membrane. It is found in the recycling endosome membrane. The protein resides in the endoplasmic reticulum membrane. The catalysed reaction is ATP + H2O + closed Cl(-) channel = ADP + phosphate + open Cl(-) channel.. The enzyme catalyses chloride(in) = chloride(out). It catalyses the reaction hydrogencarbonate(in) = hydrogencarbonate(out). It carries out the reaction ATP + H2O = ADP + phosphate + H(+). Its function is as follows. Epithelial ion channel that plays an important role in the regulation of epithelial ion and water transport and fluid homeostasis. Mediates the transport of chloride ions across the cell membrane. Possesses an intrinsic ATPase activity and utilizes ATP to gate its channel; the passive flow of anions through the channel is gated by cycles of ATP binding and hydrolysis by the ATP-binding domains. The ion channel is also permeable to HCO(3)(-); selectivity depends on the extracellular chloride concentration. Exerts its function also by modulating the activity of other ion channels and transporters. Contributes to the regulation of the pH and the ion content of the epithelial fluid layer. This Xenopus laevis (African clawed frog) protein is Cystic fibrosis transmembrane conductance regulator.